The following is a 428-amino-acid chain: MVLLHPLLTAAALLGASARAQSVVGTPFGFASGTTGGGNAAPAAPKDTNELKEWLADPNPRVIVIDKEFNFIGTEDTCTDCECCIPDSNTCGDAGQNAIKTEGSDWCGSYPATTCTYDNAGLEGMEVASDKTIIGVGDAGVIRGKGLRLVNGVSNIIIQNVHITELNPQYIWGGDAISLDGTDKIWVDHVKVSLVGRQMFVTGYESSGGVTVSNSEFDGQTKWSASCDGHHYWSVLGYGKGDQITFANNYIHHTSGRSPKIEFDSHWHAYNNFWENNSGHAFDVGEGANVLIEGNVFSNVKTPMNPEDTPGSTFAVNAQDASSCTSALGRPCIANELTSSGELSGNDEAVLSGWPKGEGDTKAMTTDKVPSYVKANAGVGKLGSGGSGAASSSVSITPSPTSSAIPSSSATPSSSAYARRHYARHHHY.

Positions 1-20 (MVLLHPLLTAAALLGASARA) are cleaved as a signal peptide. Cys-83 and Cys-107 form a disulfide bridge. Residue Arg-257 is part of the active site. Residue Asn-276 is glycosylated (N-linked (GlcNAc...) asparagine). Cys-324 and Cys-332 are disulfide-bonded. Positions 383–428 (GSGGSGAASSSVSITPSPTSSAIPSSSATPSSSAYARRHYARHHHY) are disordered. Residues 389 to 417 (AASSSVSITPSPTSSAIPSSSATPSSSAY) show a composition bias toward low complexity. Over residues 418 to 428 (ARRHYARHHHY) the composition is skewed to basic residues.

The protein belongs to the polysaccharide lyase 1 family.

It localises to the secreted. The enzyme catalyses Eliminative cleavage of (1-&gt;4)-alpha-D-galacturonan methyl ester to give oligosaccharides with 4-deoxy-6-O-methyl-alpha-D-galact-4-enuronosyl groups at their non-reducing ends.. Its function is as follows. Pectinolytic enzymes consist of four classes of enzymes: pectin lyase, polygalacturonase, pectin methylesterase and rhamnogalacturonase. Among pectinolytic enzymes, pectin lyase is the most important in depolymerization of pectin, since it cleaves internal glycosidic bonds of highly methylated pectins. The chain is Probable pectin lyase F (pelF) from Aspergillus oryzae (strain ATCC 42149 / RIB 40) (Yellow koji mold).